The chain runs to 377 residues: Probable dehydratase NIT22 (377 aa).

NADP(+)-binding residues include lysine 101 and arginine 196. The tract at residues 220-243 is disordered; the sequence is ERGPKMNEHVPSTPPRRPDAVSSF. A MaoC-like domain is found at 233–332; the sequence is PPRRPDAVSS…ILMWDMGLCK (100 aa). NADP(+) contacts are provided by threonine 265 and isoleucine 287.

Belongs to the short-chain dehydrogenases/reductases (SDR) family.

Its pathway is siderophore biosynthesis. Probable dehydratase; part of the gene cluster that mediates the biosynthesis of hydroxamate-containing siderophores that play a critical role in virulence via intracellular iron acquisition during macrophage infection. The polypeptide is Probable dehydratase NIT22 (Ajellomyces capsulatus (Darling's disease fungus)).